The sequence spans 265 residues: MQIRQSVKFKKPLIHYITNPISINDCANMILAVGAKPIMAEHPLEVSEITSISESLGINLGNITDNKMKSMLISGKTSYEKKIPQVIDLVGVGCSKLRLDYAKKFISECHPNVIKGNMSEIKAIYGIKSSAKGIDVGECDIITEQNFDENIEMIKRLSMETDSVVAATGVVDIISNGTYTYIISNGCEMLSMITGTGSMLTGIIASYISSGNILEGTALAIAIMGICGELSQNVKGTGSFRNELIDNMFSISDDIIIKKIRINSY.

Position 39 (Met-39) interacts with substrate. ATP contacts are provided by Lys-115 and Thr-168. Gly-195 is a binding site for substrate.

It belongs to the Thz kinase family. The cofactor is Mg(2+).

The enzyme catalyses 5-(2-hydroxyethyl)-4-methylthiazole + ATP = 4-methyl-5-(2-phosphooxyethyl)-thiazole + ADP + H(+). It participates in cofactor biosynthesis; thiamine diphosphate biosynthesis; 4-methyl-5-(2-phosphoethyl)-thiazole from 5-(2-hydroxyethyl)-4-methylthiazole: step 1/1. Functionally, catalyzes the phosphorylation of the hydroxyl group of 4-methyl-5-beta-hydroxyethylthiazole (THZ). The polypeptide is Hydroxyethylthiazole kinase 1 (Clostridium botulinum (strain Loch Maree / Type A3)).